The chain runs to 24 residues: Erythromycin resistance leader peptide (24 aa).

Residues 1 to 14 (MSMGIAARPPRAAL) show a composition bias toward low complexity. Residues 1–24 (MSMGIAARPPRAALLPPPSVPRSR) form a disordered region. The segment covering 15–24 (LPPPSVPRSR) has biased composition (pro residues).

Functionally, this peptide is involved in the control mechanism of the synthesis of the macrolide-lincosamide-streptogramin B resistance protein. The protein is Erythromycin resistance leader peptide of Streptomyces fradiae (Streptomyces roseoflavus).